A 360-amino-acid chain; its full sequence is DNA replication and repair protein RecF (360 aa).

33–40 (GENGSGKT) contributes to the ATP binding site.

It belongs to the RecF family.

It is found in the cytoplasm. The RecF protein is involved in DNA metabolism; it is required for DNA replication and normal SOS inducibility. RecF binds preferentially to single-stranded, linear DNA. It also seems to bind ATP. In Rickettsia bellii (strain OSU 85-389), this protein is DNA replication and repair protein RecF.